Here is a 149-residue protein sequence, read N- to C-terminus: Thioredoxin-like protein 4B (149 aa).

It belongs to the DIM1 family. As to quaternary structure, homodimer. Interacts with the U5-102 kDa protein subunit of the spliceosome.

The protein resides in the nucleus. Functionally, essential role in pre-mRNA splicing. Required in cell cycle progression for S/G(2) transition. This Homo sapiens (Human) protein is Thioredoxin-like protein 4B (TXNL4B).